Consider the following 630-residue polypeptide: MVNWQTLFMVSLRRQGSSSRYRYKFNMENITHQVFPRCKQAFKKANLSYEYCDLEGKLYNASLMDLQKMLLRDINAPRDHVFKIVRTDLVEKSSKKRIQHWEQIAPIFDHPLSLYENLLSEMDNDFKPSFEWQQLIEVRSRDDQLKLQRVVWPKSIFSNFCRGIGVKKNTYDRLLKQNNGEVPMFVNPANAKPLPLFQVGDDATIGEFDGIGIFPYFVVKHRAFFVTEVDKLKTKIISPLCNLNERKRTDKANAGRLLENEKGEPFYVDAKGAASRAADGNAVTLKQLLERSVSHKTLWSKQTNKDRTCPGDILRATILSNDFSIRQLRTEFCKNFILYNIFTILQRNKKSIRDFSNDNNVPSFRFNWNVWDSYIWKQYQEAESMTLPADQASLINYKTKYDSFLQDLQTYSTLVISEMKWNQFSIFQNNETSLSRFEHITLILQTILTKSKMIRIFQPNLYKFMQDDLRATLMELTGFTESINATIGPGFANEQSLQSANALKKLANQLLHFEQKIYAEKFRVNRPIQLRPLTLSTNFKIVILDKQNAIPEIFQTLLKFTTQITTYFVKDLSEVELHGHMHCIDKKMLDKSTFMYLYELKYNEDLKAVPPQKEKIVDNIIGLLSNDEEH.

Its subcellular location is the mitochondrion. Appears to be specifically required for the splicing of the terminal intron (bI5) of the cytochrome b pre-mRNA. Can also stimulates the splicing of the omega intron of the precursor of large ribosomal RNA. In Saccharomyces paradoxus (Yeast), this protein is Cytochrome B pre-mRNA-processing protein 2 (CBP2).